The chain runs to 588 residues: Aspartate--tRNA ligase (588 aa).

E177 is an L-aspartate binding site. Residues 201–204 (QLFK) form an aspartate region. Position 223 (R223) interacts with L-aspartate. ATP-binding positions include 223–225 (RDE) and Q232. H451 is an L-aspartate binding site. ATP is bound at residue E485. R492 provides a ligand contact to L-aspartate. 537–540 (GLDR) lines the ATP pocket.

It belongs to the class-II aminoacyl-tRNA synthetase family. Type 1 subfamily. In terms of assembly, homodimer.

Its subcellular location is the cytoplasm. It catalyses the reaction tRNA(Asp) + L-aspartate + ATP = L-aspartyl-tRNA(Asp) + AMP + diphosphate. Its function is as follows. Catalyzes the attachment of L-aspartate to tRNA(Asp) in a two-step reaction: L-aspartate is first activated by ATP to form Asp-AMP and then transferred to the acceptor end of tRNA(Asp). This is Aspartate--tRNA ligase from Staphylococcus haemolyticus (strain JCSC1435).